We begin with the raw amino-acid sequence, 941 residues long: Glycine dehydrogenase (decarboxylating) (941 aa).

Lys692 is subject to N6-(pyridoxal phosphate)lysine.

It belongs to the GcvP family. In terms of assembly, the glycine cleavage system is composed of four proteins: P, T, L and H. It depends on pyridoxal 5'-phosphate as a cofactor.

The catalysed reaction is N(6)-[(R)-lipoyl]-L-lysyl-[glycine-cleavage complex H protein] + glycine + H(+) = N(6)-[(R)-S(8)-aminomethyldihydrolipoyl]-L-lysyl-[glycine-cleavage complex H protein] + CO2. Functionally, the glycine cleavage system catalyzes the degradation of glycine. The P protein binds the alpha-amino group of glycine through its pyridoxal phosphate cofactor; CO(2) is released and the remaining methylamine moiety is then transferred to the lipoamide cofactor of the H protein. The polypeptide is Glycine dehydrogenase (decarboxylating) (Mycobacterium avium (strain 104)).